The chain runs to 445 residues: Endoplasmic reticulum membrane adapter protein XK (445 aa).

The Cytoplasmic segment spans residues 1–2 (MK). Residues 3-23 (FPASVLASVFLFVAETMAALY) traverse the membrane as a helical segment. At 24–37 (LSSTYRSAGDRMWQ) the chain is on the extracellular side. Residues 38–58 (ALTLFFSLMPCTLVQLTLLFV) traverse the membrane as a helical segment. Residues 59 to 68 (HRDLSRDRPL) lie on the Cytoplasmic side of the membrane. A helical transmembrane segment spans residues 69–89 (VLLMHLLQLGPLYRCCEVFCI). Topologically, residues 90 to 140 (YCQSDQNEEPYVSITKKRQMPKDGLSEEVEKEVGQSEGKLFTHRSAFSRAS) are extracellular. The residue at position 115 (Ser-115) is a Phosphoserine. The helical transmembrane segment at 141–161 (VIQAFLGSAPQLTLQLYITVL) threads the bilayer. At 162 to 170 (EQNITTGRF) the chain is on the cytoplasmic side. The chain crosses the membrane as a helical span at residues 171–191 (IMVLSLLSIVYGALRCNILAI). The Extracellular portion of the chain corresponds to 192–207 (KIKYDEYEVKVKPLAY). A helical membrane pass occupies residues 208–228 (VCIFLWRSFEIATRVIVLVLF). Residues 229–234 (TSVLKI) are Cytoplasmic-facing. Residues 235-255 (WVVVVILVNFFSFFLYPWILF) traverse the membrane as a helical segment. Residues 256–276 (WNSGSPFPENIEKALTRVGTT) lie on the Extracellular side of the membrane. A helical membrane pass occupies residues 277–297 (IVLGFLTLLYAGINMFCWSAV). Over 298–316 (QLKIDNPELISKSQNWYRL) the chain is Cytoplasmic. A helical transmembrane segment spans residues 317 to 337 (LIYYMMRFVENSVLLLLWFFF). Residues 338–348 (KTDIYMYVCAP) lie on the Extracellular side of the membrane. A helical membrane pass occupies residues 349 to 369 (LLILQLLIGYCTSILFMLVFY). Topologically, residues 370 to 445 (QFFHPCKKLF…IWTAVDLCST (76 aa)) are cytoplasmic.

This sequence belongs to the XK family. As to quaternary structure, heterodimer with Kell; disulfide-linked. Interacts with VPS13A.

Its subcellular location is the endoplasmic reticulum membrane. In terms of biological role, recruits the lipid transfer protein VPS13A from lipid droplets to the endoplasmic reticulum (ER) membrane. This Rattus norvegicus (Rat) protein is Endoplasmic reticulum membrane adapter protein XK.